The primary structure comprises 117 residues: MAKYSSKINKIRTFALSLVFVGFIIMYIGLFFKQSVLLASLFMILGLLSIGLSTAVYFWIGMLSTKAVRVMCPACEKETKILGRVDMCMHCREPLTLDKGLEGKAFDESYNRKNSVK.

2 helical membrane-spanning segments follow: residues 13-33 (TFAL…LFFK) and 41-61 (LFMI…FWIG).

It belongs to the UPF0295 family.

Its subcellular location is the cell membrane. The polypeptide is UPF0295 protein RBAM_008830 (Bacillus velezensis (strain DSM 23117 / BGSC 10A6 / LMG 26770 / FZB42) (Bacillus amyloliquefaciens subsp. plantarum)).